A 174-amino-acid polypeptide reads, in one-letter code: Protein HdcB (174 aa).

This Lactobacillus sp. (strain 30a) protein is Protein HdcB (hdcB).